The chain runs to 185 residues: Peptidyl-tRNA hydrolase (185 aa).

A tRNA-binding site is contributed by Y14. H19 functions as the Proton acceptor in the catalytic mechanism. Y64, N66, and N112 together coordinate tRNA.

Belongs to the PTH family. As to quaternary structure, monomer.

The protein localises to the cytoplasm. The catalysed reaction is an N-acyl-L-alpha-aminoacyl-tRNA + H2O = an N-acyl-L-amino acid + a tRNA + H(+). Its function is as follows. Hydrolyzes ribosome-free peptidyl-tRNAs (with 1 or more amino acids incorporated), which drop off the ribosome during protein synthesis, or as a result of ribosome stalling. In terms of biological role, catalyzes the release of premature peptidyl moieties from peptidyl-tRNA molecules trapped in stalled 50S ribosomal subunits, and thus maintains levels of free tRNAs and 50S ribosomes. The polypeptide is Peptidyl-tRNA hydrolase (Shouchella clausii (strain KSM-K16) (Alkalihalobacillus clausii)).